A 1151-amino-acid chain; its full sequence is Elicitor of plant defense protein 1 (1151 aa).

3 disordered regions span residues 22 to 130 (YQDP…TLGE), 178 to 197 (ERIRAEESDSGRLSPLRSIK), and 236 to 255 (NYNSVIPPPEPLNTDPDMHP). A compositionally biased stretch (acidic residues) spans 39–49 (IIEDGEPEDEW). Residues 64–99 (QNSASRLSKMSLTERFSIQTLDDTDGNTKSNRSSAT) show a composition bias toward polar residues. Residues 104–122 (NPPDFSNGNDDSNGNSQNP) are compositionally biased toward low complexity. Residues 178–187 (ERIRAEESDS) show a composition bias toward basic and acidic residues. In terms of domain architecture, uDENN spans 242-500 (PPPEPLNTDP…NLCTEAFNPL (259 aa)). The region spanning 524–656 (EIPGSRTIDI…ARRKLMSLLQ (133 aa)) is the cDENN domain. The dDENN domain occupies 658 to 1019 (AAPHKLRYGV…DREMQPANDA (362 aa)). Composition is skewed to polar residues over residues 695-711 (STPKSTLGKWVSQSSSG) and 744-760 (TSKSGKTSPQSSVSPVS). Positions 695-809 (STPKSTLGKW…SSSFGVDKHP (115 aa)) are disordered. Residues 784 to 798 (LREKRSGHFGEEKMR) show a composition bias toward basic and acidic residues. Residues 886 to 934 (GHCFNYMPKDNTSMCTICNDLAEGDGVYRCTGCKIVSHGRCLGYCSLIC) form a Phorbol-ester/DAG-type zinc finger.

Belongs to the EPD1 elicitor family.

It is found in the secreted. The protein resides in the host cell. Its function is as follows. Acts as an elicitor that triggers cell death and defense responses in the host plants. The chain is Elicitor of plant defense protein 1 from Gibberella zeae (strain ATCC MYA-4620 / CBS 123657 / FGSC 9075 / NRRL 31084 / PH-1) (Wheat head blight fungus).